Here is a 558-residue protein sequence, read N- to C-terminus: Potassium-transporting ATPase potassium-binding subunit (558 aa).

Transmembrane regions (helical) follow at residues 1–21, 59–79, 85–105, 130–150, 179–199, 245–265, 279–299, 374–394, 416–436, 484–504, and 527–547; these read MDTLAGILQVASVVLVLVLIH, PAYLRAVLAFSLVGVLVVYGL, FLPYALGLPAVPEGLSFNTAV, GLAVQNFVSAAVGIAVAIALV, LSLVTAVILIAGGVIQNFAGF, PTAWTSAFQVILMLAIPFSLP, TAIVAVMATIFVVSFTALTIF, GLYGMLILAVISVFVAGLLVG, ILVTPILVLVGTALSFAIPAV, ALGVAMLLGRFLPIVFVLALA, and FVGLLIGVTVIVTALTYFPVL.

Belongs to the KdpA family. In terms of assembly, the system is composed of three essential subunits: KdpA, KdpB and KdpC.

The protein resides in the cell membrane. Part of the high-affinity ATP-driven potassium transport (or Kdp) system, which catalyzes the hydrolysis of ATP coupled with the electrogenic transport of potassium into the cytoplasm. This subunit binds the extracellular potassium ions and delivers the ions to the membrane domain of KdpB through an intramembrane tunnel. This is Potassium-transporting ATPase potassium-binding subunit from Clavibacter michiganensis subsp. michiganensis (strain NCPPB 382).